A 439-amino-acid chain; its full sequence is Adenylosuccinate synthetase (439 aa).

Residues 25 to 31, 53 to 55, and Lys-62 contribute to the GTP site; these read GDEGKGK and GHT. Asp-26 acts as the Proton acceptor in catalysis. Positions 26 and 53 each coordinate Mg(2+). IMP is bound by residues 26-29 and 51-54; these read DEGK and NAGH. Catalysis depends on His-54, which acts as the Proton donor. Thr-141, Arg-155, Asn-232, and Thr-247 together coordinate IMP. A GTP-binding site is contributed by Thr-307. Residue 307–313 participates in substrate binding; it reads TTTKRPR. Arg-311 serves as a coordination point for IMP. GTP-binding positions include Arg-313, 339 to 341, and 425 to 427; these read KLD and GVG.

This sequence belongs to the adenylosuccinate synthetase family. Homodimer. Requires Mg(2+) as cofactor.

It is found in the cytoplasm. It carries out the reaction IMP + L-aspartate + GTP = N(6)-(1,2-dicarboxyethyl)-AMP + GDP + phosphate + 2 H(+). It functions in the pathway purine metabolism; AMP biosynthesis via de novo pathway; AMP from IMP: step 1/2. Functionally, plays an important role in the salvage pathway for purine nucleotide biosynthesis. Catalyzes the first commited step in the biosynthesis of AMP from IMP. In Plasmodium berghei (strain Anka), this protein is Adenylosuccinate synthetase (ADSS).